A 568-amino-acid polypeptide reads, in one-letter code: Potassium-transporting ATPase potassium-binding subunit (568 aa).

The next 12 helical transmembrane spans lie at 7 to 27 (LLIT…GNII), 67 to 87 (YALA…TLLV), 137 to 157 (GLTV…FALI), 180 to 200 (LYLL…QGVI), 258 to 278 (FIQI…FGQV), 288 to 308 (LLWA…YAEL), 332 to 352 (FGIL…CGAV), 361 to 381 (ALGG…FGGV), 384 to 404 (GLYG…LMIG), 421 to 441 (MVAL…ALTI), 488 to 508 (LLLA…VLAI), and 535 to 555 (LLIL…LILG).

This sequence belongs to the KdpA family. In terms of assembly, the system is composed of three essential subunits: KdpA, KdpB and KdpC.

The protein resides in the cell inner membrane. Functionally, part of the high-affinity ATP-driven potassium transport (or Kdp) system, which catalyzes the hydrolysis of ATP coupled with the electrogenic transport of potassium into the cytoplasm. This subunit binds the periplasmic potassium ions and delivers the ions to the membrane domain of KdpB through an intramembrane tunnel. This Photorhabdus laumondii subsp. laumondii (strain DSM 15139 / CIP 105565 / TT01) (Photorhabdus luminescens subsp. laumondii) protein is Potassium-transporting ATPase potassium-binding subunit.